Consider the following 116-residue polypeptide: uncharacterized protein (116 aa).

This is an uncharacterized protein from Schizosaccharomyces pombe (strain 972 / ATCC 24843) (Fission yeast).